The primary structure comprises 593 residues: Aspartate--tRNA ligase (593 aa).

E180 provides a ligand contact to L-aspartate. The aspartate stretch occupies residues 204–207 (QIFK). Position 226 (R226) interacts with L-aspartate. ATP is bound by residues 226 to 228 (RDE) and Q235. H453 is an L-aspartate binding site. E487 is a binding site for ATP. R494 provides a ligand contact to L-aspartate. Residue 539 to 542 (GLDR) participates in ATP binding.

Belongs to the class-II aminoacyl-tRNA synthetase family. Type 1 subfamily. In terms of assembly, homodimer.

Its subcellular location is the cytoplasm. It carries out the reaction tRNA(Asp) + L-aspartate + ATP = L-aspartyl-tRNA(Asp) + AMP + diphosphate. Functionally, catalyzes the attachment of L-aspartate to tRNA(Asp) in a two-step reaction: L-aspartate is first activated by ATP to form Asp-AMP and then transferred to the acceptor end of tRNA(Asp). The sequence is that of Aspartate--tRNA ligase from Clostridium botulinum (strain Kyoto / Type A2).